The following is a 541-amino-acid chain: Glucose-6-phosphate isomerase (541 aa).

The Proton donor role is filled by glutamate 346. Catalysis depends on residues histidine 377 and lysine 506.

This sequence belongs to the GPI family.

The protein localises to the cytoplasm. It catalyses the reaction alpha-D-glucose 6-phosphate = beta-D-fructose 6-phosphate. It participates in carbohydrate biosynthesis; gluconeogenesis. Its pathway is carbohydrate degradation; glycolysis; D-glyceraldehyde 3-phosphate and glycerone phosphate from D-glucose: step 2/4. Catalyzes the reversible isomerization of glucose-6-phosphate to fructose-6-phosphate. The polypeptide is Glucose-6-phosphate isomerase (Rhizobium leguminosarum bv. trifolii (strain WSM2304)).